A 381-amino-acid chain; its full sequence is uncharacterized protein (381 aa).

It belongs to the glycerate kinase type-1 family.

This is an uncharacterized protein from Mycobacterium tuberculosis (strain CDC 1551 / Oshkosh).